Here is a 299-residue protein sequence, read N- to C-terminus: Prohibitin-2 (299 aa).

At A2 the chain carries N-acetylalanine. The interval 19–49 (MGTALKLLLGAGAVAYGVRESVFTVEGGHRA) is necessary for transcriptional repression. Y128 is modified (phosphotyrosine). K147 bears the N6-acetyllysine mark. The tract at residues 150–174 (ASQLITQRAQVSLLIRRELTERAKD) is necessary for transcriptional repression. Residue S151 is modified to Phosphoserine. Residues 190 to 238 (SREYTAAVEAKQVAQQEAQRAQFLVEKAKQEQRQKIVQAEGEAEAAKML) are a coiled coil. N6-acetyllysine occurs at positions 200, 236, 250, and 262.

It belongs to the prohibitin family. As to quaternary structure, the mitochondrial prohibitin complex consists of two subunits (PHB1 and PHB2), assembled into a membrane-associated ring-shaped supercomplex of approximately 1 mDa. Interacts with ESR1, HDAC1 and HDAC5. Interacts with ZNF703. Interacts with STOML2. Interacts with ARFGEF3. Interacts with SPHK2. Interacts with COX4I1; the interaction associates PHB2 with COX. Interacts with MAP1LC3B (membrane-bound form LC3-II); the interaction is direct and upon mitochondrial depolarization and proteasome-dependent outer membrane rupture. Interacts with IGFBP6 (via C-terminal domain). Interacts with CLPB. Interacts with CD86 (via cytoplasmic domain); the interactions increases after priming with CD40. Interacts with AFG3L2. Interacts with DNAJC19. Interacts with AKT2; this interaction may be important for myogenic differentiation. Phosphorylated. Tyrosine phosphorylation is indirectly stimulated by IGFBP6.

The protein resides in the mitochondrion inner membrane. Its subcellular location is the cytoplasm. It is found in the nucleus. It localises to the cell membrane. Functionally, protein with pleiotropic attributes mediated in a cell-compartment- and tissue-specific manner, which include the plasma membrane-associated cell signaling functions, mitochondrial chaperone, and transcriptional co-regulator of transcription factors and sex steroid hormones in the nucleus. Its function is as follows. In the mitochondria, together with PHB, forms large ring complexes (prohibitin complexes) in the inner mitochondrial membrane (IMM) and functions as a chaperone protein that stabilizes mitochondrial respiratory enzymes and maintains mitochondrial integrity in the IMM, which is required for mitochondrial morphogenesis, neuronal survival, and normal lifespan. The prohibitin complex, with DNAJC19, regulates cardiolipin remodeling and the protein turnover of OMA1 in a cardiolipin-binding manner. Also regulates cytochrome-c oxidase assembly (COX) and mitochondrial respiration. Binding to sphingoid 1-phosphate (SPP) modulates its regulator activity. Has a key role of mitophagy receptor involved in targeting mitochondria for autophagic degradation. Involved in mitochondrial-mediated antiviral innate immunity, activates RIG-I-mediated signal transduction and production of IFNB1 and pro-inflammatory cytokine IL6. In terms of biological role, in the nucleus, serves as transcriptional co-regulator. Acts as a mediator of transcriptional repression by nuclear hormone receptors via recruitment of histone deacetylases. Functions as an estrogen receptor (ER)-selective coregulator that potentiates the inhibitory activities of antiestrogens and represses the activity of estrogens. Competes with NCOA1 for modulation of ER transcriptional activity. In the plasma membrane, is involved in IGFBP6-induced cell migration. Cooperates with CD86 to mediate CD86-signaling in B lymphocytes that regulates the level of IgG1 produced through the activation of distal signaling intermediates. Upon CD40 engagement, required to activate NF-kappa-B signaling pathway via phospholipase C and protein kinase C activation. This Pongo abelii (Sumatran orangutan) protein is Prohibitin-2 (PHB2).